The primary structure comprises 104 residues: MGQAAKVLQLFKTLHRTRQQVFKNDARALEAARKKINEEFKCNKTETSPKKIEELIKIGSDVELILRTSVIQGIHTDHNTLKLVPRKDLLIENVPYCDAPTQKQ.

Position 60 is a phosphoserine (S60).

It belongs to the complex I LYR family. As to quaternary structure, interacts with UQCRFS1.

It localises to the mitochondrion matrix. Functionally, assembly factor required for Rieske Fe-S protein UQCRFS1 incorporation into the cytochrome b-c1 (CIII) complex. Functions as a chaperone, binding to this subunit within the mitochondrial matrix and stabilizing it prior to its translocation and insertion into the late CIII dimeric intermediate within the mitochondrial inner membrane. The polypeptide is Complex III assembly factor LYRM7 (LYRM7) (Bos taurus (Bovine)).